A 183-amino-acid chain; its full sequence is Capsid protein (183 aa).

The disordered stretch occupies residues 136–183; the sequence is NAPILSTLPETTVVRRRGRSPRRRTPSPRRRRSQSPRRRRSQSRESQC. Residues 149 to 176 are compositionally biased toward basic residues; it reads VRRRGRSPRRRTPSPRRRRSQSPRRRRS. 3 positions are modified to phosphoserine; by host: Ser-155, Ser-162, and Ser-170. Residues 155–161 form a 1; half-length repeat; it reads SPRRRTP. The interval 155–177 is 3 X 8 AA repeats of S-P-R-R-R-[PR]-S-Q; that stretch reads SPRRRTPSPRRRRSQSPRRRRSQ. Positions 158–175 match the Bipartite nuclear localization signal motif; sequence RRTPSPRRRRSQSPRRRR. 2 consecutive repeat copies span residues 162–169 and 170–177. Residues 177–183 are RNA binding; that stretch reads QSRESQC.

Belongs to the orthohepadnavirus core antigen family. In terms of assembly, homodimerizes, then multimerizes. Interacts with cytosol exposed regions of viral L glycoprotein present in the reticulum-to-Golgi compartment. Interacts with human FLNB. Phosphorylated form interacts with host importin alpha; this interaction depends on the exposure of the NLS, which itself depends upon genome maturation and/or phosphorylation of the capsid protein. Interacts with host NUP153. Post-translationally, phosphorylated by host SRPK1, SRPK2, and maybe protein kinase C or GAPDH. Phosphorylation is critical for pregenomic RNA packaging. Protein kinase C phosphorylation is stimulated by HBx protein and may play a role in transport of the viral genome to the nucleus at the late step during the viral replication cycle.

Its subcellular location is the virion. The protein resides in the host cytoplasm. Its function is as follows. Self assembles to form an icosahedral capsid. Most capsids appear to be large particles with an icosahedral symmetry of T=4 and consist of 240 copies of capsid protein, though a fraction forms smaller T=3 particles consisting of 180 capsid proteins. Entering capsids are transported along microtubules to the nucleus. Phosphorylation of the capsid is thought to induce exposure of nuclear localization signal in the C-terminal portion of the capsid protein that allows binding to the nuclear pore complex via the importin (karyopherin-) alpha and beta. Capsids are imported in intact form through the nuclear pore into the nuclear basket, where it probably binds NUP153. Only capsids that contain the mature viral genome can release the viral DNA and capsid protein into the nucleoplasm. Immature capsids get stuck in the basket. Capsids encapsulate the pre-genomic RNA and the P protein. Pre-genomic RNA is reverse-transcribed into DNA while the capsid is still in the cytoplasm. The capsid can then either be directed to the nucleus, providing more genomes for transcription, or bud through the endoplasmic reticulum to provide new virions. In Hepatitis B virus genotype D subtype ayw (isolate France/Tiollais/1979) (HBV-D), this protein is Capsid protein.